Reading from the N-terminus, the 316-residue chain is MLKTGKGTEQEVVQVHTRKSSRLFTFFNSQKVVPYVLISPFILSFIVLSFYPTVQAIVMSFQRVLPSEVTFVGLWNYSRILNPTFFTALQNTTTYMILTVVILVSIPMLFAVLLNSKVVKFRILFRTALFLPALTSVIVAGMVFRLMFSESDTAVANQILNWIGLESVEWRYNAWSGMFLMVVLASWRWMGINILYFLAALQNVPKELYEAADIDGANVVQKFFYVTLPFLKPVTIFVTTISVIGGFRMFEESFVFWEAGSPGNIGLTIVGYLYQEGIQQNDMGFGAAIGVVLMLIIFVISITQLYLTGAFKKGDQ.

7 helical membrane-spanning segments follow: residues 32–52 (VVPY…SFYP), 94–114 (TYMI…AVLL), 128–148 (ALFL…RLMF), 178–198 (MFLM…LYFL), 224–244 (FYVT…ISVI), 254–274 (FVFW…GYLY), and 283–303 (MGFG…ISIT). One can recognise an ABC transmembrane type-1 domain in the interval 89–304 (LQNTTTYMIL…LIIFVISITQ (216 aa)).

This sequence belongs to the binding-protein-dependent transport system permease family. MalFG subfamily. The complex is composed of two ATP-binding proteins (MsmX), two transmembrane proteins (AraP and AraQ) and a solute-binding protein (AraN).

It localises to the cell membrane. In terms of biological role, part of the ABC transporter complex AraNPQ involved in the uptake of arabinooligosaccharides. Responsible for the translocation of the substrate across the membrane. The chain is Arabinooligosaccharides transport system permease protein AraP (araP) from Halalkalibacterium halodurans (strain ATCC BAA-125 / DSM 18197 / FERM 7344 / JCM 9153 / C-125) (Bacillus halodurans).